Here is a 90-residue protein sequence, read N- to C-terminus: MVKNSFISVIPQEEKEKNKGSVEFQVFSFTNKIRRLTSHLELHRKDYLSQRGLRKILGKRQRLLAYLSKKNRVRYKELIGRLDIREPKTR.

The protein belongs to the universal ribosomal protein uS15 family. In terms of assembly, part of the 30S ribosomal subunit.

The protein resides in the plastid. The protein localises to the chloroplast. This is Small ribosomal subunit protein uS15c (rps15) from Liriodendron tulipifera (Tuliptree).